Consider the following 329-residue polypeptide: Serine dehydratase-like (329 aa).

At Met1 the chain carries N-acetylmethionine. Position 48 is an N6-(pyridoxal phosphate)lysine (Lys48).

This sequence belongs to the serine/threonine dehydratase family. As to quaternary structure, monomer. Homodimer. Pyridoxal 5'-phosphate is required as a cofactor. In terms of tissue distribution, expressed in lung cancer cell lines.

It catalyses the reaction L-serine = pyruvate + NH4(+). The catalysed reaction is L-threonine = 2-oxobutanoate + NH4(+). It carries out the reaction L-glutamate = D-glutamate. Its function is as follows. Catalyzes the pyridoxal-phosphate-dependent dehydrative deamination of L-threonine and L-serine to ammonia and alpha-ketobutyrate and pyruvate, respectively. Also exhibits racemase activity towards L-glutamate and D-glutamate. The polypeptide is Serine dehydratase-like (SDSL) (Homo sapiens (Human)).